Consider the following 266-residue polypeptide: GTP cyclohydrolase FolE2 (266 aa).

It belongs to the GTP cyclohydrolase IV family.

The enzyme catalyses GTP + H2O = 7,8-dihydroneopterin 3'-triphosphate + formate + H(+). It participates in cofactor biosynthesis; 7,8-dihydroneopterin triphosphate biosynthesis; 7,8-dihydroneopterin triphosphate from GTP: step 1/1. Functionally, converts GTP to 7,8-dihydroneopterin triphosphate. This is GTP cyclohydrolase FolE2 from Burkholderia mallei (strain ATCC 23344).